Consider the following 308-residue polypeptide: Ribosomal RNA large subunit methyltransferase F (308 aa).

Belongs to the methyltransferase superfamily. METTL16/RlmF family.

It is found in the cytoplasm. The catalysed reaction is adenosine(1618) in 23S rRNA + S-adenosyl-L-methionine = N(6)-methyladenosine(1618) in 23S rRNA + S-adenosyl-L-homocysteine + H(+). In terms of biological role, specifically methylates the adenine in position 1618 of 23S rRNA. The chain is Ribosomal RNA large subunit methyltransferase F from Escherichia coli O127:H6 (strain E2348/69 / EPEC).